Reading from the N-terminus, the 493-residue chain is Voltage-gated potassium channel regulatory subunit KCNF1 (493 aa).

Residues 1–183 (MDASAEQSLP…KPESSCPARV (183 aa)) lie on the Cytoplasmic side of the membrane. The helical transmembrane segment at 184-204 (VAVLSFLLILVSSVVMCMGTI) threads the bilayer. A helical membrane pass occupies residues 224 to 244 (NVETACIGWFTLEYLLRLFSS). Residues 245–249 (PNKLH) are Cytoplasmic-facing. A helical transmembrane segment spans residues 250–270 (FALSFMNIVDVLAILPFYVSL). A helical; Voltage-sensor membrane pass occupies residues 290–310 (QALRIMRIARIFKLARHSSGL). The Cytoplasmic segment spans residues 311 to 324 (QTLTYALKRSFKEL). The helical transmembrane segment at 325–345 (GLLLMYLAVGIFVFSALGYTM) threads the bilayer. The pore-forming intramembrane region spans 358–378 (PQSFWWAIITMTTVGYGDIYP). Positions 370–375 (TVGYGD) match the Selectivity filter motif. The chain crosses the membrane as a helical span at residues 386-406 (NAAISFLCGVIAIALPIHPII). Over 407–493 (NNFVRYYNKQ…HHRTRLQSCK (87 aa)) the chain is Cytoplasmic. A disordered region spans residues 434–468 (SSSAEGKPGGSRSDLDTLPPEPAAREGPSWGSRLK).

Belongs to the potassium channel family. F (TC 1.A.1.2) subfamily. Kv5.1/KCNF1 sub-subfamily. Heterotetramer with KCNB1 or KCNB2.

Its subcellular location is the cell membrane. Regulatory alpha-subunit of the voltage-gated potassium (Kv) channel which, when coassembled with KCNB1 or KCNB2, can modulate their expression and their gating kinetics by acting on deactivation upon repolarization and inactivation during maintained depolarization. Accelerates inactivation but has relatively little effect on deactivation. Coexpression with KCNB1 or KCNB2 markedly slows inactivation. Each modulatory subunit has its own specific properties of regulation, and can lead to extensive inhibitions, to large changes in kinetics, and/or to large shifts in the voltage dependencies of the inactivation process. The gating kinetics depends on the nature and stoichiometry of the associated regulatory sunbunit. Fails to produce a potassium current when expressed alone. The chain is Voltage-gated potassium channel regulatory subunit KCNF1 from Mus musculus (Mouse).